A 508-amino-acid polypeptide reads, in one-letter code: Protein NODULATION SIGNALING PATHWAY 2 (508 aa).

The tract at residues 75–98 (ITTTTTTTTTTDEEEEEMETTTTT) is disordered. Positions 108–500 (VGDDSKGLKL…RRLLSASLWT (393 aa)) constitute a GRAS domain. The interval 115–190 (LKLVHLLMAG…NNHHHHNNNK (76 aa)) is leucine repeat I (LRI). A VHIID region spans residues 209 to 273 (FQLLQDMSPY…NNGPHLRITA (65 aa)). Positions 240 to 244 (VHVID) match the VHIID motif. Positions 289–321 (ETGRRLTSFAASLGQPFSFHHCRLDSDETFRPS) are leucine repeat II (LRII). Residues 331-422 (LVFNCMLNLP…RVFFGPRIAG (92 aa)) are PFYRE. An SAW region spans residues 425 to 500 (GRIYRTGGEE…RRLLSASLWT (76 aa)).

This sequence belongs to the GRAS family. In terms of assembly, interacts with RAM1. Interacts with IPN2 and RAD1. Expressed in roots, shoots and leaves.

It localises to the nucleus membrane. The protein resides in the endoplasmic reticulum. Transcriptional regulator essential for Nod-factor-induced gene expression. Acts downstream of calcium spiking and DMI3, a calcium/calmodulin-dependent protein kinase (CCaMK). Transcription factor involved in the control of strigolactone biosynthesis in roots through the activation of the beta-carotene isomerase D27, which participates in a pathway leading to biosynthesis of strigolactones. This chain is Protein NODULATION SIGNALING PATHWAY 2, found in Medicago truncatula (Barrel medic).